A 217-amino-acid chain; its full sequence is 3-demethoxyubiquinol 3-hydroxylase (217 aa).

Glu-66, Glu-96, His-99, Glu-148, Glu-180, and His-183 together coordinate Fe cation.

This sequence belongs to the COQ7 family. The cofactor is Fe cation.

It localises to the cell membrane. It carries out the reaction a 5-methoxy-2-methyl-3-(all-trans-polyprenyl)benzene-1,4-diol + AH2 + O2 = a 3-demethylubiquinol + A + H2O. It functions in the pathway cofactor biosynthesis; ubiquinone biosynthesis. Functionally, catalyzes the hydroxylation of 2-nonaprenyl-3-methyl-6-methoxy-1,4-benzoquinol during ubiquinone biosynthesis. This chain is 3-demethoxyubiquinol 3-hydroxylase, found in Xanthomonas campestris pv. campestris (strain 8004).